The sequence spans 304 residues: Quinolinate synthase 1 (304 aa).

Residues His-24 and Ser-41 each coordinate iminosuccinate. Cys-86 is a binding site for [4Fe-4S] cluster. Residues Tyr-112–Asn-114 and Ser-129 contribute to the iminosuccinate site. Cys-171 contributes to the [4Fe-4S] cluster binding site. Iminosuccinate-binding positions include His-197–Glu-199 and Thr-214. [4Fe-4S] cluster is bound at residue Cys-259.

Belongs to the quinolinate synthase family. Type 2 subfamily. The cofactor is [4Fe-4S] cluster.

It is found in the cytoplasm. The catalysed reaction is iminosuccinate + dihydroxyacetone phosphate = quinolinate + phosphate + 2 H2O + H(+). It participates in cofactor biosynthesis; NAD(+) biosynthesis; quinolinate from iminoaspartate: step 1/1. Functionally, catalyzes the condensation of iminoaspartate with dihydroxyacetone phosphate to form quinolinate. The chain is Quinolinate synthase 1 from Methanosarcina acetivorans (strain ATCC 35395 / DSM 2834 / JCM 12185 / C2A).